A 67-amino-acid chain; its full sequence is Conotoxin TsMMSK-011 (67 aa).

The N-terminal stretch at 1-20 (MMSKLGVLLTICLLLFPLTA) is a signal peptide. Positions 21–50 (VQLDGDQPADLPALRTQDISTDHSPWFDPV) are excised as a propeptide. Intrachain disulfides connect C53–C65, C54–C61, and C58–C64. P63 bears the 4-hydroxyproline mark.

The protein belongs to the conotoxin M superfamily. Expressed by the venom duct.

It is found in the secreted. This is Conotoxin TsMMSK-011 from Conus tessulatus (Tessellate cone).